The sequence spans 355 residues: Phospho-N-acetylmuramoyl-pentapeptide-transferase (355 aa).

10 helical membrane-spanning segments follow: residues 14–34, 40–60, 84–104, 107–127, 147–167, 176–196, 205–225, 227–247, 268–290, and 334–354; these read PTGT…VVFF, LLIP…QVVP, GTPT…ALIW, FTPN…IGWL, LILQ…NQVS, LVIP…VAES, VDGL…IIIA, SHPD…GFIF, ALAA…GLFF, and TKIV…AIWS.

This sequence belongs to the glycosyltransferase 4 family. MraY subfamily. Mg(2+) serves as cofactor.

The protein resides in the cell inner membrane. It carries out the reaction UDP-N-acetyl-alpha-D-muramoyl-L-alanyl-gamma-D-glutamyl-meso-2,6-diaminopimeloyl-D-alanyl-D-alanine + di-trans,octa-cis-undecaprenyl phosphate = di-trans,octa-cis-undecaprenyl diphospho-N-acetyl-alpha-D-muramoyl-L-alanyl-D-glutamyl-meso-2,6-diaminopimeloyl-D-alanyl-D-alanine + UMP. The protein operates within cell wall biogenesis; peptidoglycan biosynthesis. Catalyzes the initial step of the lipid cycle reactions in the biosynthesis of the cell wall peptidoglycan: transfers peptidoglycan precursor phospho-MurNAc-pentapeptide from UDP-MurNAc-pentapeptide onto the lipid carrier undecaprenyl phosphate, yielding undecaprenyl-pyrophosphoryl-MurNAc-pentapeptide, known as lipid I. This is Phospho-N-acetylmuramoyl-pentapeptide-transferase from Microcystis aeruginosa (strain NIES-843 / IAM M-2473).